The following is a 396-amino-acid chain: MIKLRLTKDAKVGCCFLIFGLLNNLLYVIILSAALDLVGANVSKGVVLLSNIVPSLACKLSASILHVHKFKFAKRIGFCVFMSILGMQWIAWSSSVPSKMLGVSLAAISSSFGEISFLHLSSRYHSVSLPCWSSGTGLAGLFGASSYLVMTTWFNFSVRSTLIISSFLPLFLLIMYFFVLPESESTSPSINNNYTPIESIDLRAGHVSFNFVNSLKQTFIFMQPYLLSHMFPQFLVYFSEYTINIGVAPTLLFPPEKAGFSSFRDFYPTYQTVYQIGVFLSRSSISFFTVPYLRTLAITQFIILLFTILQSALYLTSSYHFVLFLIFVEGLIGGTVYVNVYHSLQTTESSQRELAISTVGSSDSSGIFLASLVSLFLEPSLCHFQADRGRDWCALT.

The next 8 helical transmembrane spans lie at 15–35, 45–65, 76–96, 138–158, 161–181, 234–254, 296–316, and 321–341; these read CFLIFGLLNNLLYVIILSAAL, GVVLLSNIVPSLACKLSASIL, IGFCVFMSILGMQWIAWSSSV, LAGLFGASSYLVMTTWFNFSV, TLIISSFLPLFLLIMYFFVLP, FLVYFSEYTINIGVAPTLLFP, LAITQFIILLFTILQSALYLT, and FVLFLIFVEGLIGGTVYVNVY.

The protein belongs to the battenin family.

It is found in the endoplasmic reticulum membrane. The protein resides in the vacuole membrane. Its function is as follows. Involved in vacuolar transport and vacuole pH homeostasis. Also required for cytokinesis. This is Protein btn1 from Schizosaccharomyces pombe (strain 972 / ATCC 24843) (Fission yeast).